The primary structure comprises 385 residues: 8-amino-7-oxononanoate synthase (385 aa).

R21 contributes to the substrate binding site. 108–109 is a pyridoxal 5'-phosphate binding site; that stretch reads GF. H133 provides a ligand contact to substrate. Pyridoxal 5'-phosphate-binding residues include S179, H207, and T233. K236 is modified (N6-(pyridoxal phosphate)lysine). T352 provides a ligand contact to substrate.

Belongs to the class-II pyridoxal-phosphate-dependent aminotransferase family. BioF subfamily. In terms of assembly, homodimer. Pyridoxal 5'-phosphate is required as a cofactor.

The catalysed reaction is 6-carboxyhexanoyl-[ACP] + L-alanine + H(+) = (8S)-8-amino-7-oxononanoate + holo-[ACP] + CO2. The protein operates within cofactor biosynthesis; biotin biosynthesis. Functionally, catalyzes the decarboxylative condensation of pimeloyl-[acyl-carrier protein] and L-alanine to produce 8-amino-7-oxononanoate (AON), [acyl-carrier protein], and carbon dioxide. This chain is 8-amino-7-oxononanoate synthase, found in Salmonella agona (strain SL483).